A 277-amino-acid polypeptide reads, in one-letter code: Shikimate dehydrogenase (NADP(+)) (277 aa).

Shikimate is bound by residues 19 to 21 (SKS) and Thr-66. The active-site Proton acceptor is Lys-70. NADP(+) is bound at residue Asp-82. Positions 91 and 107 each coordinate shikimate. Residues 133-137 (GAGGA), 157-162 (NRTRAR), and Leu-222 each bind NADP(+). Tyr-224 is a shikimate binding site. Gly-245 contacts NADP(+).

It belongs to the shikimate dehydrogenase family. Homodimer.

The catalysed reaction is shikimate + NADP(+) = 3-dehydroshikimate + NADPH + H(+). The protein operates within metabolic intermediate biosynthesis; chorismate biosynthesis; chorismate from D-erythrose 4-phosphate and phosphoenolpyruvate: step 4/7. Involved in the biosynthesis of the chorismate, which leads to the biosynthesis of aromatic amino acids. Catalyzes the reversible NADPH linked reduction of 3-dehydroshikimate (DHSA) to yield shikimate (SA). The protein is Shikimate dehydrogenase (NADP(+)) of Roseobacter denitrificans (strain ATCC 33942 / OCh 114) (Erythrobacter sp. (strain OCh 114)).